The primary structure comprises 209 residues: Orotate phosphoribosyltransferase (209 aa).

Residues Arg96, Lys100, His102, and 122–130 (EDLISTGKS) contribute to the 5-phospho-alpha-D-ribose 1-diphosphate site. Ser126 is an orotate binding site.

Belongs to the purine/pyrimidine phosphoribosyltransferase family. PyrE subfamily. In terms of assembly, homodimer. The cofactor is Mg(2+).

It catalyses the reaction orotidine 5'-phosphate + diphosphate = orotate + 5-phospho-alpha-D-ribose 1-diphosphate. The protein operates within pyrimidine metabolism; UMP biosynthesis via de novo pathway; UMP from orotate: step 1/2. Functionally, catalyzes the transfer of a ribosyl phosphate group from 5-phosphoribose 1-diphosphate to orotate, leading to the formation of orotidine monophosphate (OMP). The chain is Orotate phosphoribosyltransferase from Coxiella burnetii (strain RSA 493 / Nine Mile phase I).